We begin with the raw amino-acid sequence, 262 residues long: Acyl-[acyl-carrier-protein]--UDP-N-acetylglucosamine O-acyltransferase (262 aa).

The protein belongs to the transferase hexapeptide repeat family. LpxA subfamily. As to quaternary structure, homotrimer.

The protein resides in the cytoplasm. It carries out the reaction a (3R)-hydroxyacyl-[ACP] + UDP-N-acetyl-alpha-D-glucosamine = a UDP-3-O-[(3R)-3-hydroxyacyl]-N-acetyl-alpha-D-glucosamine + holo-[ACP]. Its pathway is glycolipid biosynthesis; lipid IV(A) biosynthesis; lipid IV(A) from (3R)-3-hydroxytetradecanoyl-[acyl-carrier-protein] and UDP-N-acetyl-alpha-D-glucosamine: step 1/6. Involved in the biosynthesis of lipid A, a phosphorylated glycolipid that anchors the lipopolysaccharide to the outer membrane of the cell. The polypeptide is Acyl-[acyl-carrier-protein]--UDP-N-acetylglucosamine O-acyltransferase (Sodalis glossinidius (strain morsitans)).